The primary structure comprises 492 residues: Steroid 21-hydroxylase (492 aa).

Residues R92 and K121 each coordinate heme b. R232 serves as a coordination point for 17alpha-hydroxyprogesterone. R232 provides a ligand contact to progesterone. Heme b is bound by residues H364, R425, and C427.

The protein belongs to the cytochrome P450 family. It depends on heme b as a cofactor.

Its subcellular location is the endoplasmic reticulum membrane. The protein resides in the microsome membrane. It carries out the reaction progesterone + reduced [NADPH--hemoprotein reductase] + O2 = 21-hydroxyprogesterone + oxidized [NADPH--hemoprotein reductase] + H2O + H(+). The enzyme catalyses 17alpha-hydroxyprogesterone + reduced [NADPH--hemoprotein reductase] + O2 = 11-deoxycortisol + oxidized [NADPH--hemoprotein reductase] + H2O + H(+). Functionally, a cytochrome P450 monooxygenase that plays a major role in adrenal steroidogenesis. Catalyzes the hydroxylation at C-21 of progesterone and 17alpha-hydroxyprogesterone to respectively form 11-deoxycorticosterone and 11-deoxycortisol, intermediate metabolites in the biosynthetic pathway of mineralocorticoids and glucocorticoids. Mechanistically, uses molecular oxygen inserting one oxygen atom into a substrate, and reducing the second into a water molecule, with two electrons provided by NADPH via cytochrome P450 reductase (CPR; NADPH-ferrihemoprotein reductase). The chain is Steroid 21-hydroxylase (CYP21) from Sus scrofa (Pig).